The sequence spans 347 residues: Suppressor of RNA-mediated gene silencing (347 aa).

It belongs to the phytoreovirus non-structural protein 10 family.

In terms of biological role, suppressor of RNA-mediated gene silencing, also known as post-transcriptional gene silencing (PTGS), a mechanism of plant viral defense that limits the accumulation of viral RNAs. This is Suppressor of RNA-mediated gene silencing from Catharanthus roseus (Madagascar periwinkle).